The primary structure comprises 113 residues: U11-theraphotoxin-Hhn1q (113 aa).

The first 21 residues, 1–21 (MNTVRVTFLLVFVLAVSLGQA), serve as a signal peptide directing secretion. Residues 22-74 (DKDENRMEMQEKTEQGKSYLDFAENLLLQKLEELEAKLLEEDSEESRNSRQKR) constitute a propeptide that is removed on maturation. Residues 61–82 (EEDSEESRNSRQKRCIGEGVPC) are disordered. Intrachain disulfides connect cysteine 75–cysteine 90, cysteine 82–cysteine 95, and cysteine 89–cysteine 110.

The protein belongs to the neurotoxin 14 (magi-1) family. 01 (HNTX-16) subfamily. In terms of tissue distribution, expressed by the venom gland.

The protein resides in the secreted. Its function is as follows. Probable ion channel inhibitor. The sequence is that of U11-theraphotoxin-Hhn1q from Cyriopagopus hainanus (Chinese bird spider).